A 1025-amino-acid chain; its full sequence is Multidrug resistance protein MdtC (1025 aa).

A run of 12 helical transmembrane segments spans residues 3–23, 333–353, 360–380, 387–407, 431–451, 463–483, 528–548, 853–873, 875–895, 897–917, 953–973, and 984–1004; these read FFAL…AITL, EVEQ…FLFL, IIPA…MYLC, LSLM…IVVL, VGFT…PLLL, FAVT…TLTP, LVGV…ISIP, VILI…LYES, VHPL…LLAL, LFNA…IGIV, PIMM…LSGG, and ITIV…TPVV.

Belongs to the resistance-nodulation-cell division (RND) (TC 2.A.6) family. MdtC subfamily. In terms of assembly, part of a tripartite efflux system composed of MdtA, MdtB and MdtC. MdtC forms a heteromultimer with MdtB.

Its subcellular location is the cell inner membrane. In terms of biological role, the MdtABC tripartite complex confers resistance against novobiocin and deoxycholate. This Escherichia coli (strain 55989 / EAEC) protein is Multidrug resistance protein MdtC.